We begin with the raw amino-acid sequence, 78 residues long: Major outer membrane lipoprotein Lpp (78 aa).

An N-terminal signal peptide occupies residues 1–19; it reads MKAKIVLGAVILASGLLAG. Residue Cys20 is the site of N-palmitoyl cysteine attachment. Cys20 carries the S-diacylglycerol cysteine lipid modification. 2 repeats span residues 25 to 35 and 39 to 49; these read NAQLDQISSDV and NTQVQQLSSDV. The stretch at 28-62 forms a coiled coil; that stretch reads LDQISSDVNRLNTQVQQLSSDVQSANAQAKAAYEA. Lys78 bears the N6-murein peptidoglycan lysine mark.

This sequence belongs to the Lpp family. As to quaternary structure, homotrimer.

The protein localises to the cell outer membrane. It localises to the secreted. It is found in the cell wall. Its function is as follows. A highly abundant outer membrane lipoprotein that controls the distance between the inner and outer membranes. The only protein known to be covalently linked to the peptidoglycan network (PGN). Also non-covalently binds the PGN. The link between the cell outer membrane and PGN contributes to maintenance of the structural and functional integrity of the cell envelope, and maintains the correct distance between the PGN and the outer membrane. The protein is Major outer membrane lipoprotein Lpp of Proteus mirabilis.